Here is a 355-residue protein sequence, read N- to C-terminus: tRNA uridine(34) hydroxylase (355 aa).

The 95-residue stretch at 146 to 240 (DDPDTLFVDM…YARKAKEQGL (95 aa)) folds into the Rhodanese domain. Catalysis depends on C200, which acts as the Cysteine persulfide intermediate. Positions 333–355 (NKSKGLLQATMHIPSPEKSADEK) are disordered.

It belongs to the TrhO family.

It catalyses the reaction uridine(34) in tRNA + AH2 + O2 = 5-hydroxyuridine(34) in tRNA + A + H2O. In terms of biological role, catalyzes oxygen-dependent 5-hydroxyuridine (ho5U) modification at position 34 in tRNAs. The sequence is that of tRNA uridine(34) hydroxylase from Yersinia pseudotuberculosis serotype O:1b (strain IP 31758).